Here is a 179-residue protein sequence, read N- to C-terminus: Large ribosomal subunit protein uL5 (179 aa).

Belongs to the universal ribosomal protein uL5 family. In terms of assembly, part of the 50S ribosomal subunit; part of the 5S rRNA/L5/L18/L25 subcomplex. Contacts the 5S rRNA and the P site tRNA. Forms a bridge to the 30S subunit in the 70S ribosome.

This is one of the proteins that bind and probably mediate the attachment of the 5S RNA into the large ribosomal subunit, where it forms part of the central protuberance. In the 70S ribosome it contacts protein S13 of the 30S subunit (bridge B1b), connecting the 2 subunits; this bridge is implicated in subunit movement. Contacts the P site tRNA; the 5S rRNA and some of its associated proteins might help stabilize positioning of ribosome-bound tRNAs. The chain is Large ribosomal subunit protein uL5 from Thermoanaerobacter sp. (strain X514).